A 314-amino-acid polypeptide reads, in one-letter code: uncharacterized protein (314 aa).

The next 2 helical transmembrane spans lie at 23–43 and 98–118; these read LALGPVHPGGPTLIDLLMALF and MASGIGGALSGALGGVMGPLT. A compositionally biased stretch (gly residues) spans 165–184; that stretch reads GLGSGAGGGDVGGGGAGGTT. The interval 165–314 is disordered; it reads GLGSGAGGGD…APDEKTDAGE (150 aa). The segment covering 190–202 has biased composition (pro residues); it reads GPPPVPTSSPPTT. 2 stretches are compositionally biased toward low complexity: residues 203-212 and 219-232; these read PAGAPTKSAT and ASPASAHMGAAGMP. Residues 221–241 traverse the membrane as a helical segment; it reads PASAHMGAAGMPMVPPGAMGA. Residues 294–314 are compositionally biased toward basic and acidic residues; sequence LLPEHKDFGRIAPDEKTDAGE.

It localises to the cell membrane. This is an uncharacterized protein from Mycobacterium tuberculosis (strain CDC 1551 / Oshkosh).